A 164-amino-acid polypeptide reads, in one-letter code: Transcription antitermination protein NusB (164 aa).

Belongs to the NusB family.

Involved in transcription antitermination. Required for transcription of ribosomal RNA (rRNA) genes. Binds specifically to the boxA antiterminator sequence of the ribosomal RNA (rrn) operons. The protein is Transcription antitermination protein NusB of Chlorobaculum parvum (strain DSM 263 / NCIMB 8327) (Chlorobium vibrioforme subsp. thiosulfatophilum).